The chain runs to 135 residues: Small ribosomal subunit protein bS6 (135 aa).

The disordered stretch occupies residues 96 to 135 (HAEGPSIQMQKRDERERGDRGDRSDRGDRGDRGDRGGFRR). Positions 105–135 (QKRDERERGDRGDRSDRGDRGDRGDRGGFRR) are enriched in basic and acidic residues.

This sequence belongs to the bacterial ribosomal protein bS6 family.

In terms of biological role, binds together with bS18 to 16S ribosomal RNA. This Cereibacter sphaeroides (strain ATCC 17029 / ATH 2.4.9) (Rhodobacter sphaeroides) protein is Small ribosomal subunit protein bS6.